Reading from the N-terminus, the 551-residue chain is MFASAGQQHPQIVPKEEESILNYLLEVRSSLAKLKQNRTQYLNSKDVQTTYQHVLTKVRELDDIRKNSHETPAKSAATLIHSTELHNRVDSVLDDVFQLLSLCFLTVGLKNSAPATYASLSTVESLLEHLNESNVFTHHDLSPIKERLEEISKIVEQKNSSPAYDEDGNDDRLREIDNERKKNKIEEDLLLRAKLKHCKDEYDILEGKLEEIDPSLSTVMEKLFRIRRGLLSLVASAKKTMSKSDINTNSLLQEQNDLQTNNESLTDDKHLVSQEYVHEKLSVLKNELSELESNRDDSGKFKSLESHQVAEKGQSVLNGLLDDCHDLVNDLSHQKNGGLTLDPYLQPIYEQLIDIKTTLENLMITRRWTLRETDLFSYQKKLNEIDNKRINGKFPTKSQDSKGQSILLYLLRRCYAIIYKLLESSEPVSEALQPIHNQLSTVRRCLLELKRMGGVNNERELYPYQMKLASLDNLRTEGIFYDSDGNIPEGQGILNALLAECFDILHELKVEAEEKAQNSTSSDGSDDDDNGESGIDSNSNDSEPESEYQQE.

Coiled-coil stretches lie at residues 174 to 213 and 249 to 300; these read REID…EEID and NSLL…DSGK. The segment at 513-551 is disordered; sequence EEKAQNSTSSDGSDDDDNGESGIDSNSNDSEPESEYQQE. A compositionally biased stretch (low complexity) spans 532–541; the sequence is ESGIDSNSND. Residues 542 to 551 are compositionally biased toward acidic residues; the sequence is SEPESEYQQE.

The protein belongs to the CUB1 family. In terms of assembly, monomer. In terms of processing, phosphorylated by PKA in vitro.

It localises to the cytoplasm. The protein resides in the nucleus. In terms of biological role, involved in bleomycin tolerance with links to DNA repair and/or proteasome function. The sequence is that of Cu(2+) suppressing and bleomycin sensitive protein 1 (CUB1) from Saccharomyces cerevisiae (strain ATCC 204508 / S288c) (Baker's yeast).